The chain runs to 422 residues: Tyrosine--tRNA ligase (422 aa).

An L-tyrosine-binding site is contributed by Tyr-35. Positions 40 to 49 match the 'HIGH' region motif; the sequence is PTAPSLHVGH. 2 residues coordinate L-tyrosine: Tyr-170 and Gln-174. A 'KMSKS' region motif is present at residues 231-235; it reads KFGKT. Lys-234 provides a ligand contact to ATP. In terms of domain architecture, S4 RNA-binding spans 353 to 419; sequence APVVDLFAEV…GKKNLAAVEI (67 aa).

The protein belongs to the class-I aminoacyl-tRNA synthetase family. TyrS type 1 subfamily. As to quaternary structure, homodimer.

Its subcellular location is the cytoplasm. It carries out the reaction tRNA(Tyr) + L-tyrosine + ATP = L-tyrosyl-tRNA(Tyr) + AMP + diphosphate + H(+). Functionally, catalyzes the attachment of tyrosine to tRNA(Tyr) in a two-step reaction: tyrosine is first activated by ATP to form Tyr-AMP and then transferred to the acceptor end of tRNA(Tyr). The polypeptide is Tyrosine--tRNA ligase (Streptomyces coelicolor (strain ATCC BAA-471 / A3(2) / M145)).